Consider the following 253-residue polypeptide: FAS1 domain-containing protein CAGL0M08734g (253 aa).

The signal sequence occupies residues 1–16; the sequence is MVALKYVLVPVALVAA. Residues 84-248 form the FAS1 domain; sequence DIYLDSQISV…GVILVIDATL (165 aa).

It is found in the vacuole. The sequence is that of FAS1 domain-containing protein CAGL0M08734g from Candida glabrata (strain ATCC 2001 / BCRC 20586 / JCM 3761 / NBRC 0622 / NRRL Y-65 / CBS 138) (Yeast).